The following is a 636-amino-acid chain: Interleukin-27 receptor subunit alpha (636 aa).

A signal peptide spans 1–32 (MRGGRGAPFWLWPLPKLALLPLLWVLFQRTRP). Over 33–516 (QGSAGPLQCY…HLPDNTLRWK (484 aa)) the chain is Extracellular. Asparagine 51 and asparagine 76 each carry an N-linked (GlcNAc...) asparagine glycan. Positions 131–231 (PRLGPDVDFS…PILSFQTPPS (101 aa)) constitute a Fibronectin type-III 1 domain. Positions 217-221 (WGEWS) match the WSXWS motif motif. Residues asparagine 302, asparagine 311, asparagine 374, asparagine 382, and asparagine 467 are each glycosylated (N-linked (GlcNAc...) asparagine). Fibronectin type-III domains are found at residues 322–417 (APRS…LAPL) and 419–511 (GPTL…LPDN). The helical transmembrane segment at 517–537 (VLPGILFLWGLFLLGCGLSLA) threads the bilayer. At 538 to 636 (TSGRCYHLRH…LGPPRPQVLA (99 aa)) the chain is on the cytoplasmic side. Positions 554 to 562 (VWEKVPDPA) match the Box 1 motif motif. The segment at 587–636 (EVEEMEPPPVMESSQPAQATAPLDSGYEKHFLPTPEELGLLGPPRPQVLA) is disordered. A compositionally biased stretch (low complexity) spans 618–628 (LPTPEELGLLG).

It belongs to the type I cytokine receptor family. Type 2 subfamily. In terms of assembly, component of a receptor complex composed of IL6ST/GP130, IL27RA/WSX1 and CNTFR which interacts with the neuroprotective peptide humanin. Highly expressed in lymphoid tissues such as spleen, lymph nodes and peripheral blood leukocytes. Weakly expressed in other tissues examined including heart, brain, fetal and adult lung, liver, skeletal muscle, kidney, pancreas, prostate, testis, ovary, small intestine, kidney and colon. In the lymphoid system, higher level expression in CD4+ T-cell subsets than in CD8+ T-cell subsets. Also weaker expression in CD19+ B-cells and monocytes.

Its subcellular location is the membrane. Its function is as follows. Receptor for IL27. Requires IL6ST/GP130 to mediate signal transduction in response to IL27. This signaling system acts through STAT3 and STAT1. Acts as a receptor for the neuroprotective peptide humanin as part of a complex with IL6ST/GP130 and CNTFR. Involved in the regulation of Th1-type immune responses. Also appears to be involved in innate defense mechanisms. This is Interleukin-27 receptor subunit alpha (IL27RA) from Homo sapiens (Human).